The chain runs to 52 residues: Large ribosomal subunit protein bL32c (52 aa).

It belongs to the bacterial ribosomal protein bL32 family.

It is found in the plastid. The protein localises to the chloroplast. The sequence is that of Large ribosomal subunit protein bL32c from Lobularia maritima (Sweet alyssum).